Here is an 89-residue protein sequence, read N- to C-terminus: Small ribosomal subunit protein uS15 (89 aa).

It belongs to the universal ribosomal protein uS15 family. Part of the 30S ribosomal subunit. Forms a bridge to the 50S subunit in the 70S ribosome, contacting the 23S rRNA.

One of the primary rRNA binding proteins, it binds directly to 16S rRNA where it helps nucleate assembly of the platform of the 30S subunit by binding and bridging several RNA helices of the 16S rRNA. Functionally, forms an intersubunit bridge (bridge B4) with the 23S rRNA of the 50S subunit in the ribosome. This Kineococcus radiotolerans (strain ATCC BAA-149 / DSM 14245 / SRS30216) protein is Small ribosomal subunit protein uS15.